The following is a 100-amino-acid chain: Urease subunit gamma (100 aa).

It belongs to the urease gamma subunit family. In terms of assembly, heterotrimer of UreA (gamma), UreB (beta) and UreC (alpha) subunits. Three heterotrimers associate to form the active enzyme.

The protein resides in the cytoplasm. It carries out the reaction urea + 2 H2O + H(+) = hydrogencarbonate + 2 NH4(+). It functions in the pathway nitrogen metabolism; urea degradation; CO(2) and NH(3) from urea (urease route): step 1/1. The chain is Urease subunit gamma from Haemophilus influenzae (strain PittGG).